We begin with the raw amino-acid sequence, 446 residues long: Bifunctional protein GlmU (446 aa).

The segment at 1 to 229 is pyrophosphorylase; that stretch reads MTEKPVALIV…EAETLGINTR (229 aa). Residues 11–14, Lys-25, Gln-78, 83–84, 106–108, Gly-141, Glu-155, Asn-170, and Asn-227 contribute to the UDP-N-acetyl-alpha-D-glucosamine site; these read LAAG, GT, and YGD. Asp-108 serves as a coordination point for Mg(2+). Asn-227 is a Mg(2+) binding site. The linker stretch occupies residues 230 to 250; it reads AELAAAEAAFQVRARARALED. The tract at residues 251–446 is N-acetyltransferase; it reads GVTMTDPATV…MQALRQKKGN (196 aa). Positions 316 and 334 each coordinate UDP-N-acetyl-alpha-D-glucosamine. His-346 functions as the Proton acceptor in the catalytic mechanism. The UDP-N-acetyl-alpha-D-glucosamine site is built by Tyr-349 and Asn-360. Acetyl-CoA-binding positions include Ala-363, 369–370, Ser-388, Ser-406, and Arg-423; that span reads NY.

It in the N-terminal section; belongs to the N-acetylglucosamine-1-phosphate uridyltransferase family. In the C-terminal section; belongs to the transferase hexapeptide repeat family. As to quaternary structure, homotrimer. Mg(2+) serves as cofactor.

The protein resides in the cytoplasm. The enzyme catalyses alpha-D-glucosamine 1-phosphate + acetyl-CoA = N-acetyl-alpha-D-glucosamine 1-phosphate + CoA + H(+). The catalysed reaction is N-acetyl-alpha-D-glucosamine 1-phosphate + UTP + H(+) = UDP-N-acetyl-alpha-D-glucosamine + diphosphate. It participates in nucleotide-sugar biosynthesis; UDP-N-acetyl-alpha-D-glucosamine biosynthesis; N-acetyl-alpha-D-glucosamine 1-phosphate from alpha-D-glucosamine 6-phosphate (route II): step 2/2. It functions in the pathway nucleotide-sugar biosynthesis; UDP-N-acetyl-alpha-D-glucosamine biosynthesis; UDP-N-acetyl-alpha-D-glucosamine from N-acetyl-alpha-D-glucosamine 1-phosphate: step 1/1. Its pathway is bacterial outer membrane biogenesis; LPS lipid A biosynthesis. In terms of biological role, catalyzes the last two sequential reactions in the de novo biosynthetic pathway for UDP-N-acetylglucosamine (UDP-GlcNAc). The C-terminal domain catalyzes the transfer of acetyl group from acetyl coenzyme A to glucosamine-1-phosphate (GlcN-1-P) to produce N-acetylglucosamine-1-phosphate (GlcNAc-1-P), which is converted into UDP-GlcNAc by the transfer of uridine 5-monophosphate (from uridine 5-triphosphate), a reaction catalyzed by the N-terminal domain. The sequence is that of Bifunctional protein GlmU from Paracoccus denitrificans (strain Pd 1222).